The chain runs to 328 residues: MTEEKAEEKNKMASVFLPALGGVAVCGGTHGNELSGVYLVQEMERQRKERGDGVWPIPVTTVLSNPRAVKECRRYIDTDMNRCFSKAVLSTPITDSSPYEVRRAQELNNLLGVKGSDDVMDMICDLHNTTSNMGLTLIHYSASDWVTLHICKYLQTKITKVPVRVLVLDFPINDAYNLESVSKHGFTLEVGPQPQGVVRADIYVIMKEAVDLTIDWIHKFNSGTVFEGGDVEVFKFIKSVDYPRDPETRNLTAAVHPQLQDRDFCLLKRGDPLFLSFSGETVTCEEEEPLHPFFINEGAYYEKGIAFHLAKKWTLTVPSVQVQTTNSA.

The Zn(2+) site is built by H30 and E33. Substrate contacts are provided by residues R74 and 81-82 (NR). H127 lines the Zn(2+) pocket. Substrate contacts are provided by E189 and Y300.

This sequence belongs to the AspA/AstE family. Aspartoacylase subfamily. Homotetramer. Zn(2+) serves as cofactor.

The protein localises to the apical cell membrane. It is found in the cytoplasm. It catalyses the reaction an N-acyl-aromatic L-alpha-amino acid + H2O = an aromatic L-alpha-amino acid + a carboxylate. The catalysed reaction is an N-acetyl-L-cysteine-S-conjugate + H2O = an S-substituted L-cysteine + acetate. Functionally, plays an important role in deacetylating mercapturic acids in kidney proximal tubules. The protein is N-acyl-aromatic-L-amino acid amidohydrolase (carboxylate-forming) A (acy3.1) of Danio rerio (Zebrafish).